Consider the following 30-residue polypeptide: Kappa-sparatoxin-Hv1d (30 aa).

Disulfide bonds link C3–C17, C10–C22, and C16–C26.

Expressed by the venom gland.

It localises to the secreted. Inhibitor of voltage-gated potassium channels of the Kv4/KCND family. Blocks calcium channels (Cav). This is Kappa-sparatoxin-Hv1d from Heteropoda venatoria (Brown huntsman spider).